Consider the following 508-residue polypeptide: Monocarboxylate transporter 9 (508 aa).

Residues 1-12 lie on the Cytoplasmic side of the membrane; that stretch reads MEFQKSPDGGWG. A run of 12 helical transmembrane segments spans residues 13–33, 53–73, 80–100, 102–122, 137–157, 164–184, 303–323, 341–361, 370–390, 396–416, 431–451, and 460–480; these read WVIVVVSFFTQFLSYGSPLAV, WVGSLASGVGLLASPVCSLFV, PVTIFSGFLVAGGLMLSSLAP, IYFLFFSYGIVVGLGCGLLYT, GLALGLISTGSSVGLFIYAAL, FYGLDGCLLIVGALALNILAC, VFSALFIAILLFDIGGFPPSL, MPLISIFGIMTAVGKLLLGIL, LYLYVATLIITGLALCAIPFA, LAILSGILGFLTGNWSIFPYV, GILMFFAGLGNSLGPPIVGWF, and IAFYFSGFCVLLGGFILLLAI. Residues 481–508 are Cytoplasmic-facing; it reads LPCWDMCNKKLPKPAVPTTFFYKVASNV.

Belongs to the major facilitator superfamily. Monocarboxylate porter (TC 2.A.1.13) family.

The protein resides in the cell membrane. It carries out the reaction creatine(in) = creatine(out). The enzyme catalyses (R)-carnitine(in) = (R)-carnitine(out). Functionally, extracellular pH-and Na(+)-sensitive low-affinity creatine transporter. Also functions as a pH-independent carnitine efflux transporter. This chain is Monocarboxylate transporter 9 (Slc16a9), found in Mus musculus (Mouse).